We begin with the raw amino-acid sequence, 143 residues long: MAYKHILVAVDLSPESQVLVRKAVSMAKPDNAKVSLIHVDVNYSDLYTGLIDVNLGDMQQRISEETRSALKALSADSAYDIQETLSGSGDLGQVLVDAIKKYGIDMVVCGHHQDFWSKLMSSARQLINTVHVDMLIVPLRDDE.

Belongs to the universal stress protein A family. In terms of assembly, homodimer.

The protein resides in the cytoplasm. Functionally, required for resistance to DNA-damaging agents. This is Universal stress protein A (uspA) from Photorhabdus laumondii subsp. laumondii (strain DSM 15139 / CIP 105565 / TT01) (Photorhabdus luminescens subsp. laumondii).